A 121-amino-acid polypeptide reads, in one-letter code: Chorion class A proteins Ld9 (121 aa).

The protein belongs to the chorion protein family.

Its function is as follows. This protein is one of many from the eggshell of the gypsy moth. This is Chorion class A proteins Ld9 from Lymantria dispar (Gypsy moth).